A 368-amino-acid polypeptide reads, in one-letter code: RNA polymerase sigma factor SigA (368 aa).

The segment at 16-90 (TLTLEDVKKQ…KLNPSDLSAP (75 aa)) is sigma-70 factor domain-1. The segment at 69–90 (LVNEKDSSDTDEKLNPSDLSAP) is disordered. The span at 71-83 (NEKDSSDTDEKLN) shows a compositional bias: basic and acidic residues. Residues 135 to 205 (LAEANLRLVV…TRAIADQART (71 aa)) form a sigma-70 factor domain-2 region. The Interaction with polymerase core subunit RpoC motif lies at 159–162 (DLIQ). Positions 214–291 (ETINKLIRVQ…QEAQSPSDHA (78 aa)) are sigma-70 factor domain-3. A sigma-70 factor domain-4 region spans residues 303 to 356 (VLDTLTDREENVLRLRFGLDDGRTRTLEEVGKVFGVTRERIRQIEAKALRKLRH). The H-T-H motif DNA-binding region spans 329–348 (LEEVGKVFGVTRERIRQIEA).

Belongs to the sigma-70 factor family. RpoD/SigA subfamily. As to quaternary structure, interacts transiently with the RNA polymerase catalytic core formed by RpoA, RpoB, RpoC and RpoZ (2 alpha, 1 beta, 1 beta' and 1 omega subunit) to form the RNA polymerase holoenzyme that can initiate transcription. Interacts (via sigma-70 factor domain 4) with the phage G1 protein gp67; this inhibits rRNA synthesis. Interaction with phage G1 protein gp67 does not inhibit transcription in general, but selectively inhibits transcription from promoters that require interaction of the RNA polymerase alpha subunit with DNA sequences upstream of the -35 promoter element.

Its subcellular location is the cytoplasm. Sigma factors are initiation factors that promote the attachment of RNA polymerase to specific initiation sites and are then released. This sigma factor is the primary sigma factor during exponential growth. In Staphylococcus aureus (strain NCTC 8325 / PS 47), this protein is RNA polymerase sigma factor SigA.